The chain runs to 124 residues: Ribonuclease pancreatic (124 aa).

Basic and acidic residues predominate over residues 1 to 13 (KETAAAKFERQHM). The disordered stretch occupies residues 1 to 24 (KETAAAKFERQHMDSSTSSASSSN). Residues K7 and R10 each coordinate substrate. Catalysis depends on H12, which acts as the Proton acceptor. 4 cysteine pairs are disulfide-bonded: C26–C84, C40–C95, C58–C110, and C65–C72. Residues 41–45 (KPVBT), K66, and R85 each bind substrate. Catalysis depends on H119, which acts as the Proton donor.

It belongs to the pancreatic ribonuclease family. As to quaternary structure, monomer. Interacts with and forms tight 1:1 complexes with RNH1. Dimerization of two such complexes may occur. Interaction with RNH1 inhibits this protein. In terms of tissue distribution, pancreas.

The protein resides in the secreted. It carries out the reaction an [RNA] containing cytidine + H2O = an [RNA]-3'-cytidine-3'-phosphate + a 5'-hydroxy-ribonucleotide-3'-[RNA].. The enzyme catalyses an [RNA] containing uridine + H2O = an [RNA]-3'-uridine-3'-phosphate + a 5'-hydroxy-ribonucleotide-3'-[RNA].. In terms of biological role, endonuclease that catalyzes the cleavage of RNA on the 3' side of pyrimidine nucleotides. Acts on single-stranded and double-stranded RNA. The chain is Ribonuclease pancreatic (RNASE1) from Boselaphus tragocamelus (Nilgai).